The chain runs to 279 residues: Urease accessory protein UreD (279 aa).

It belongs to the UreD family. In terms of assembly, ureD, UreF and UreG form a complex that acts as a GTP-hydrolysis-dependent molecular chaperone, activating the urease apoprotein by helping to assemble the nickel containing metallocenter of UreC. The UreE protein probably delivers the nickel.

Its subcellular location is the cytoplasm. Required for maturation of urease via the functional incorporation of the urease nickel metallocenter. In Rhodopseudomonas palustris (strain ATCC BAA-98 / CGA009), this protein is Urease accessory protein UreD.